The chain runs to 371 residues: 4-hydroxyphenylpyruvate dioxygenase-like protein (371 aa).

2 consecutive VOC domains span residues 7–135 (RLCH…LLQR) and 160–328 (HVDH…VFTK). 3 residues coordinate Fe cation: His163, His258, and Glu339.

It belongs to the 4HPPD family. Requires Fe cation as cofactor.

It is found in the mitochondrion. The enzyme catalyses 3-(4-hydroxyphenyl)pyruvate + O2 = (S)-4-hydroxymandelate + CO2. Functionally, iron-dependent dioxygenase that catalyzes the conversion of 4-hydroxyphenylpyruvate (4-HPPA) to 4-hydroxymandelate (4-HMA) in the mitochondria, one of the steps in the biosynthesis of coenzyme Q10 from tyrosine. This is 4-hydroxyphenylpyruvate dioxygenase-like protein from Rattus norvegicus (Rat).